Reading from the N-terminus, the 890-residue chain is Potassium/sodium hyperpolarization-activated cyclic nucleotide-gated channel 1 (890 aa).

The disordered stretch occupies residues 1-93 (MEGGGKPNSS…AEGPRRQYGF (93 aa)). Over 1 to 142 (MEGGGKPNSS…WIIHPYSDFR (142 aa)) the chain is Cytoplasmic. Residues 8–34 (NSSSNSRDDGNSVFPAKASATGAGPAA) show a composition bias toward low complexity. Residues 62-77 (DGGGGGGGGGGGGEEP) show a composition bias toward gly residues. Residues 143–164 (FYWDLIMLIMMVGNLVIIPVGI) traverse the membrane as a helical segment. Residues 165–173 (TFFTEQTTT) lie on the Extracellular side of the membrane. A helical membrane pass occupies residues 174 to 194 (PWIIFNVASDTVFLLDLIMNF). Residues 195–215 (RTGTVNEDSSEIILDPKVIKM) lie on the Cytoplasmic side of the membrane. Residues 216–236 (NYLKSWFVVDFISSIPVDYIF) traverse the membrane as a helical segment. Over 237 to 260 (LIVEKGMDSEVYKTARALRIVRFT) the chain is Extracellular. A helical; Voltage-sensor transmembrane segment spans residues 261–281 (KILSLLRLLRLSRLIRYIHQW). Residues 282–295 (EEIFHMTYDLASAV) are Cytoplasmic-facing. Residues 296-318 (VRIFNLIGMMLLLCHWDGCLQFL) form a helical membrane-spanning segment. Topologically, residues 319–344 (VPLLQDFPPDCWVSLNEMVNDSWGKQ) are extracellular. Asn-338 carries an N-linked (GlcNAc...) asparagine glycan. The segment at residues 345-366 (YSYALFKAMSHMLCIGYGAQAP) is an intramembrane region (pore-forming). The short motif at 358–362 (CIGYG) is the Selectivity filter element. At 367 to 371 (VSMSD) the chain is on the extracellular side. A helical membrane pass occupies residues 372–392 (LWITMLSMIVGATCYAMFVGH). Over 393 to 890 (ATALIQSLDS…AEKPRFASNL (498 aa)) the chain is Cytoplasmic. Positions 539, 540, 542, 549, 550, 590, and 593 each coordinate 3',5'-cyclic AMP. 2 stretches are compositionally biased toward low complexity: residues 644 to 691 (MTTL…PQPS) and 731 to 749 (QQQP…TQPQ). Disordered regions lie at residues 644-692 (MTTL…QPSA), 725-796 (SQLS…LPHE), and 845-890 (MSSG…ASNL). A compositionally biased stretch (polar residues) spans 770–780 (STQALHNTNLT). The segment covering 854–865 (RGVPPAPPPPAA) has biased composition (pro residues). Positions 880-890 (DAEKPRFASNL) are enriched in basic and acidic residues.

Belongs to the potassium channel HCN family. In terms of assembly, homotetramer. Heterotetramer with HCN2. The potassium channel is composed of a homo- or heterotetrameric complex of pore-forming subunits. Interacts with KCNE2. Interacts with the SH3 domain of CSK. As to expression, detected in brain, in particular in amygdala and hippocampus, while expression in caudate nucleus, corpus callosum, substantia nigra, subthalamic nucleus and thalamus is very low or not detectable. Detected at very low levels in muscle and pancreas.

It is found in the cell membrane. The catalysed reaction is Na(+)(in) = Na(+)(out). It catalyses the reaction K(+)(in) = K(+)(out). Its activity is regulated as follows. Activated by cAMP, and at 10-100 times higher concentrations, also by cGMP. cAMP binding promotes tetramerization and formation of an active channel. Compared to other family members, cAMP has less stimulatory effect on HCN1 because part of the molecules already contain bound cAMP and form homotetramers when cAMP levels are low, this inherent tetramerization in HCN1 results in a weaker response to increased cAMP. Inhibited by Cs(1+), zatebradine, capsazepine and ZD7288. Functionally, hyperpolarization-activated ion channel that are permeable to sodium and potassium ions. Displays lower selectivity for K(+) over Na(+) ions. Contributes to the native pacemaker currents in heart (If) and in the generation of the I(h) current which controls neuron excitability. Participates in cerebellar mechanisms of motor learning. May mediate responses to sour stimuli. The sequence is that of Potassium/sodium hyperpolarization-activated cyclic nucleotide-gated channel 1 (HCN1) from Homo sapiens (Human).